The following is a 319-amino-acid chain: tRNA uridine(34) hydroxylase (319 aa).

One can recognise a Rhodanese domain in the interval 127 to 221; the sequence is KQEDTVIIDA…YGKDPEVQGE (95 aa). The active-site Cysteine persulfide intermediate is the Cys181.

The protein belongs to the TrhO family.

It carries out the reaction uridine(34) in tRNA + AH2 + O2 = 5-hydroxyuridine(34) in tRNA + A + H2O. Functionally, catalyzes oxygen-dependent 5-hydroxyuridine (ho5U) modification at position 34 in tRNAs. The protein is tRNA uridine(34) hydroxylase of Bacillus cereus (strain Q1).